The following is a 243-amino-acid chain: Thaumatin-like protein (243 aa).

The N-terminal stretch at 1–20 (MASINLFLFAFLLLLSHASA) is a signal peptide. Disulfide bonds link Cys-29–Cys-238, Cys-77–Cys-87, Cys-92–Cys-98, Cys-144–Cys-228, Cys-149–Cys-211, Cys-157–Cys-174, Cys-178–Cys-187, and Cys-188–Cys-198.

The protein belongs to the thaumatin family.

This chain is Thaumatin-like protein, found in Arabidopsis thaliana (Mouse-ear cress).